We begin with the raw amino-acid sequence, 328 residues long: Phosphate acyltransferase (328 aa).

It belongs to the PlsX family. As to quaternary structure, homodimer. Probably interacts with PlsY.

The protein localises to the cytoplasm. It carries out the reaction a fatty acyl-[ACP] + phosphate = an acyl phosphate + holo-[ACP]. It participates in lipid metabolism; phospholipid metabolism. Its function is as follows. Catalyzes the reversible formation of acyl-phosphate (acyl-PO(4)) from acyl-[acyl-carrier-protein] (acyl-ACP). This enzyme utilizes acyl-ACP as fatty acyl donor, but not acyl-CoA. The protein is Phosphate acyltransferase of Campylobacter jejuni subsp. jejuni serotype O:6 (strain 81116 / NCTC 11828).